We begin with the raw amino-acid sequence, 372 residues long: Cytochrome b (372 aa).

Helical transmembrane passes span 25 to 45 (FGSM…FLSM), 69 to 90 (WMMQ…YIHV), 105 to 125 (WLSG…GYVL), and 170 to 190 (FFAL…LHIM). 2 residues coordinate heme b: histidine 75 and histidine 89. 2 residues coordinate heme b: histidine 174 and histidine 188. Residue histidine 193 participates in a ubiquinone binding. Transmembrane regions (helical) follow at residues 218-238 (YKDL…ISFI), 280-300 (LGGA…PFTH), 312-332 (FMQL…WTAT), and 339-358 (YTMI…MSNP).

The protein belongs to the cytochrome b family. As to quaternary structure, the cytochrome bc1 complex contains 3 respiratory subunits (MT-CYB, CYC1 and UQCRFS1), 2 core proteins (UQCRC1 and UQCRC2) and probably 6 low-molecular weight proteins. The cofactor is heme b.

It localises to the mitochondrion inner membrane. Its function is as follows. Component of the ubiquinol-cytochrome c reductase complex (complex III or cytochrome b-c1 complex) that is part of the mitochondrial respiratory chain. The b-c1 complex mediates electron transfer from ubiquinol to cytochrome c. Contributes to the generation of a proton gradient across the mitochondrial membrane that is then used for ATP synthesis. This chain is Cytochrome b (MT-CYB), found in Acrantophis madagascariensis (Madagascar ground boa).